A 412-amino-acid polypeptide reads, in one-letter code: Hyaluronidase-3 (412 aa).

The N-terminal stretch at 1–22 is a signal peptide; it reads MIMHLGLMMVVGLTLCLMHGQA. 5 disulfide bridges follow: Cys-42/Cys-332, Cys-206/Cys-221, Cys-357/Cys-368, Cys-362/Cys-396, and Cys-398/Cys-407. A glycan (N-linked (GlcNAc...) asparagine) is linked at Asn-69. Glu-129 (proton donor) is an active-site residue. The N-linked (GlcNAc...) asparagine glycan is linked to Asn-216. Residues 353-408 enclose the EGF-like domain; sequence AAMACSHQRCHGHGRCARKDPGQMEAFLHLQPDDSLGAWNSFRCHCYSGWAGPTCL.

The protein belongs to the glycosyl hydrolase 56 family. In terms of processing, N-glycosylated. Expressed in testis, epididymal tissue, epididymal luminal fluid (ELF), acrosome-intact (AI) sperm and caput (CAP), corpus (COR) and caudal (CAU) sperm. Higher expression in sperm than testis (at protein level). Liver, kidney, skin, brain, stomach and testis. Expressed mainly in granulosa cells of the ovaries. Expressed in small and large antral follicles. Not present in theca or stroma cells. Expressed in testis and liver. Expressed in testis and CAP, COR, and CAU epididymis tissue.

It localises to the secreted. The protein resides in the cell membrane. Its subcellular location is the cytoplasmic vesicle. It is found in the secretory vesicle. The protein localises to the acrosome. It localises to the endoplasmic reticulum. The protein resides in the early endosome. It carries out the reaction Random hydrolysis of (1-&gt;4)-linkages between N-acetyl-beta-D-glucosamine and D-glucuronate residues in hyaluronate.. In terms of biological role, facilitates sperm penetration into the layer of cumulus cells surrounding the egg by digesting hyaluronic acid. Involved in induction of the acrosome reaction in the sperm. Involved in follicular atresia, the breakdown of immature ovarian follicles that are not selected to ovulate. Induces ovarian granulosa cell apoptosis, possibly via apoptotic signaling pathway involving CASP8 and CASP3 activation, and poly(ADP-ribose) polymerase (PARP) cleavage. Has no hyaluronidase activity in embryonic fibroblasts in vitro. Has no hyaluronidase activity in granulosa cells in vitro. This chain is Hyaluronidase-3 (Hyal3), found in Mus musculus (Mouse).